The chain runs to 476 residues: Sulfate adenylyltransferase subunit 1 (476 aa).

The tr-type G domain maps to 24-240; sequence KSLLRFLTCG…LENVDIDRDK (217 aa). The tract at residues 33–40 is G1; the sequence is GSVDDGKS. Residue 33–40 participates in GTP binding; that stretch reads GSVDDGKS. The G2 stretch occupies residues 91–95; that stretch reads GITID. The interval 112-115 is G3; that stretch reads DTPG. GTP-binding positions include 112–116 and 167–170; these read DTPGH and NKMD. The interval 167 to 170 is G4; sequence NKMD. The segment at 205–207 is G5; that stretch reads SAL.

This sequence belongs to the TRAFAC class translation factor GTPase superfamily. Classic translation factor GTPase family. CysN/NodQ subfamily. In terms of assembly, heterodimer composed of CysD, the smaller subunit, and CysN.

It carries out the reaction sulfate + ATP + H(+) = adenosine 5'-phosphosulfate + diphosphate. The protein operates within sulfur metabolism; hydrogen sulfide biosynthesis; sulfite from sulfate: step 1/3. Its function is as follows. With CysD forms the ATP sulfurylase (ATPS) that catalyzes the adenylation of sulfate producing adenosine 5'-phosphosulfate (APS) and diphosphate, the first enzymatic step in sulfur assimilation pathway. APS synthesis involves the formation of a high-energy phosphoric-sulfuric acid anhydride bond driven by GTP hydrolysis by CysN coupled to ATP hydrolysis by CysD. This is Sulfate adenylyltransferase subunit 1 from Vibrio cholerae serotype O1 (strain ATCC 39541 / Classical Ogawa 395 / O395).